The sequence spans 129 residues: Glycine cleavage system H protein (129 aa).

The Lipoyl-binding domain occupies 24–106 (SYTVGITEHA…YGEGWFFRVM (83 aa)). Lys-65 bears the N6-lipoyllysine mark.

The protein belongs to the GcvH family. In terms of assembly, the glycine cleavage system is composed of four proteins: P, T, L and H. The cofactor is (R)-lipoate.

Functionally, the glycine cleavage system catalyzes the degradation of glycine. The H protein shuttles the methylamine group of glycine from the P protein to the T protein. This Shewanella putrefaciens (strain CN-32 / ATCC BAA-453) protein is Glycine cleavage system H protein.